A 630-amino-acid polypeptide reads, in one-letter code: tRNA uridine 5-carboxymethylaminomethyl modification enzyme MnmG (630 aa).

FAD is bound at residue 13 to 18 (GGGHAG). 273-287 (GPRYCPSIEDKVMRF) is an NAD(+) binding site.

The protein belongs to the MnmG family. As to quaternary structure, homodimer. Heterotetramer of two MnmE and two MnmG subunits. It depends on FAD as a cofactor.

It is found in the cytoplasm. Its function is as follows. NAD-binding protein involved in the addition of a carboxymethylaminomethyl (cmnm) group at the wobble position (U34) of certain tRNAs, forming tRNA-cmnm(5)s(2)U34. The protein is tRNA uridine 5-carboxymethylaminomethyl modification enzyme MnmG of Actinobacillus pleuropneumoniae serotype 7 (strain AP76).